Reading from the N-terminus, the 55-residue chain is MYNAPMAQEMSYYEHVQRRHEEKGCLYACIFTALCCFCCYETCECCLDCLCCCCN.

Residues 24-40 (GCLYACIFTALCCFCCY) traverse the membrane as a helical segment.

The protein belongs to the CYSTM1 family.

The protein resides in the cell membrane. Its subcellular location is the secreted. It is found in the cell wall. Confers resistance to heavy metal ions (e.g. cadmium (CdCl(2)) and copper (CuCl(2))) by chelating them at the plasma membrane of root cells, thus stopping their entry and reducing their accumulation. Binds to aluminium (Al). The chain is Protein CADMIUM TOLERANCE 1 from Oryza sativa subsp. indica (Rice).